The sequence spans 443 residues: Xaa-Pro dipeptidase (443 aa).

Mn(2+) contacts are provided by aspartate 246, aspartate 257, histidine 339, glutamate 384, and glutamate 423.

Belongs to the peptidase M24B family. Bacterial-type prolidase subfamily. It depends on Mn(2+) as a cofactor.

It catalyses the reaction Xaa-L-Pro dipeptide + H2O = an L-alpha-amino acid + L-proline. Its function is as follows. Splits dipeptides with a prolyl residue in the C-terminal position. The protein is Xaa-Pro dipeptidase of Klebsiella pneumoniae subsp. pneumoniae (strain ATCC 700721 / MGH 78578).